The sequence spans 276 residues: Large ribosomal subunit protein uL2 (276 aa).

2 disordered regions span residues 35-58 and 218-276; these read RKLS…GGGH and RPIT…KNRK. Over residues 255–276 the composition is skewed to basic residues; it reads RRPKKASNKMIVRRRPNGKNRK.

This sequence belongs to the universal ribosomal protein uL2 family. Part of the 50S ribosomal subunit. Forms a bridge to the 30S subunit in the 70S ribosome.

Its function is as follows. One of the primary rRNA binding proteins. Required for association of the 30S and 50S subunits to form the 70S ribosome, for tRNA binding and peptide bond formation. It has been suggested to have peptidyltransferase activity; this is somewhat controversial. Makes several contacts with the 16S rRNA in the 70S ribosome. The polypeptide is Large ribosomal subunit protein uL2 (Bifidobacterium adolescentis (strain ATCC 15703 / DSM 20083 / NCTC 11814 / E194a)).